A 270-amino-acid polypeptide reads, in one-letter code: Putative carbamate hydrolase RutD (270 aa).

Belongs to the AB hydrolase superfamily. Hydrolase RutD family.

The enzyme catalyses carbamate + 2 H(+) = NH4(+) + CO2. Functionally, involved in pyrimidine catabolism. May facilitate the hydrolysis of carbamate, a reaction that can also occur spontaneously. In Escherichia coli O44:H18 (strain 042 / EAEC), this protein is Putative carbamate hydrolase RutD.